A 231-amino-acid polypeptide reads, in one-letter code: ATP-dependent dethiobiotin synthetase BioD 2 (231 aa).

Position 13 to 18 (13 to 18 (SVGKTV)) interacts with ATP. A Mg(2+)-binding site is contributed by T17. K38 is an active-site residue. Residues D55, 112–115 (EGTG), 172–173 (NR), 201–203 (PYL), and Q208 contribute to the ATP site. D55 and E112 together coordinate Mg(2+).

Belongs to the dethiobiotin synthetase family. In terms of assembly, homodimer. Mg(2+) serves as cofactor.

Its subcellular location is the cytoplasm. The catalysed reaction is (7R,8S)-7,8-diammoniononanoate + CO2 + ATP = (4R,5S)-dethiobiotin + ADP + phosphate + 3 H(+). The protein operates within cofactor biosynthesis; biotin biosynthesis; biotin from 7,8-diaminononanoate: step 1/2. Catalyzes a mechanistically unusual reaction, the ATP-dependent insertion of CO2 between the N7 and N8 nitrogen atoms of 7,8-diaminopelargonic acid (DAPA, also called 7,8-diammoniononanoate) to form a ureido ring. This is ATP-dependent dethiobiotin synthetase BioD 2 from Escherichia coli O157:H7.